The chain runs to 190 residues: Putative 3-methyladenine DNA glycosylase (190 aa).

This sequence belongs to the DNA glycosylase MPG family.

The chain is Putative 3-methyladenine DNA glycosylase from Rubrobacter xylanophilus (strain DSM 9941 / JCM 11954 / NBRC 16129 / PRD-1).